A 141-amino-acid chain; its full sequence is Small ribosomal subunit protein uS8c (141 aa).

Belongs to the universal ribosomal protein uS8 family. In terms of assembly, part of the 30S ribosomal subunit.

The protein resides in the plastid. It localises to the chloroplast. One of the primary rRNA binding proteins, it binds directly to 16S rRNA central domain where it helps coordinate assembly of the platform of the 30S subunit. The protein is Small ribosomal subunit protein uS8c (rps8) of Chlamydomonas reinhardtii (Chlamydomonas smithii).